We begin with the raw amino-acid sequence, 206 residues long: MKLLAIDSSILTNTSVSRQLTRSFVSRWQKIYPETEVVYRDLHAQPINHLSQKILAANSVPSTQISAEIREEMNLSMQLISELLSASVLVIGAPMYNFSIPSQLKSWIDRIVIAGKTFKYVDGKVQGLATGKRAYILSSRGGFYNAEPALNLDHQERYLTSILNFIGISDITFIRAEGVNVGEEIRTQSLHQAEAKIQQLLQFQMA.

FMN-binding positions include Ser9, 15 to 17, 95 to 98, and 139 to 142; these read SVS, MYNF, and SRGG.

This sequence belongs to the azoreductase type 1 family. Homodimer. Requires FMN as cofactor.

The enzyme catalyses 2 a quinone + NADH + H(+) = 2 a 1,4-benzosemiquinone + NAD(+). It carries out the reaction N,N-dimethyl-1,4-phenylenediamine + anthranilate + 2 NAD(+) = 2-(4-dimethylaminophenyl)diazenylbenzoate + 2 NADH + 2 H(+). In terms of biological role, quinone reductase that provides resistance to thiol-specific stress caused by electrophilic quinones. Also exhibits azoreductase activity. Catalyzes the reductive cleavage of the azo bond in aromatic azo compounds to the corresponding amines. This Legionella pneumophila subsp. pneumophila (strain Philadelphia 1 / ATCC 33152 / DSM 7513) protein is FMN-dependent NADH:quinone oxidoreductase.